A 440-amino-acid chain; its full sequence is Histidinol dehydrogenase (440 aa).

Residues Tyr-139, Gln-200, and Asn-223 each coordinate NAD(+). The substrate site is built by Ser-246, Gln-268, and His-271. Positions 268 and 271 each coordinate Zn(2+). Catalysis depends on proton acceptor residues Glu-336 and His-337. Substrate-binding residues include His-337, Asp-370, Glu-424, and His-429. Asp-370 provides a ligand contact to Zn(2+). His-429 is a binding site for Zn(2+).

It belongs to the histidinol dehydrogenase family. Zn(2+) serves as cofactor.

It catalyses the reaction L-histidinol + 2 NAD(+) + H2O = L-histidine + 2 NADH + 3 H(+). Its pathway is amino-acid biosynthesis; L-histidine biosynthesis; L-histidine from 5-phospho-alpha-D-ribose 1-diphosphate: step 9/9. Catalyzes the sequential NAD-dependent oxidations of L-histidinol to L-histidinaldehyde and then to L-histidine. In Bordetella bronchiseptica (strain ATCC BAA-588 / NCTC 13252 / RB50) (Alcaligenes bronchisepticus), this protein is Histidinol dehydrogenase.